The primary structure comprises 191 residues: Holliday junction branch migration complex subunit RuvA (191 aa).

Positions 1–64 are domain I; that stretch reads MIGSITGNVE…DNITQLYGFL (64 aa). A domain II region spans residues 65–142; it reads NRQEQDYLKM…KMPIEETFSI (78 aa). The interval 143–146 is flexible linker; sequence IEND. A domain III region spans residues 146 to 191; the sequence is DDSLAALISLGYEKLKAFNVIQEIKSKTPDASTQEVIRKALQKLSQ.

The protein belongs to the RuvA family. In terms of assembly, homotetramer. Forms an RuvA(8)-RuvB(12)-Holliday junction (HJ) complex. HJ DNA is sandwiched between 2 RuvA tetramers; dsDNA enters through RuvA and exits via RuvB. An RuvB hexamer assembles on each DNA strand where it exits the tetramer. Each RuvB hexamer is contacted by two RuvA subunits (via domain III) on 2 adjacent RuvB subunits; this complex drives branch migration. In the full resolvosome a probable DNA-RuvA(4)-RuvB(12)-RuvC(2) complex forms which resolves the HJ.

It localises to the cytoplasm. Its function is as follows. The RuvA-RuvB-RuvC complex processes Holliday junction (HJ) DNA during genetic recombination and DNA repair, while the RuvA-RuvB complex plays an important role in the rescue of blocked DNA replication forks via replication fork reversal (RFR). RuvA specifically binds to HJ cruciform DNA, conferring on it an open structure. The RuvB hexamer acts as an ATP-dependent pump, pulling dsDNA into and through the RuvAB complex. HJ branch migration allows RuvC to scan DNA until it finds its consensus sequence, where it cleaves and resolves the cruciform DNA. In Ehrlichia ruminantium (strain Welgevonden), this protein is Holliday junction branch migration complex subunit RuvA.